Reading from the N-terminus, the 952-residue chain is Isoleucine--tRNA ligase (952 aa).

The 'HIGH' region signature appears at 60–70; that stretch reads PYANGSLHIGH. Glutamate 562 serves as a coordination point for L-isoleucyl-5'-AMP. The 'KMSKS' region signature appears at 603–607; sequence KMSKS. Residue lysine 606 coordinates ATP. Positions 921, 924, 941, and 944 each coordinate Zn(2+).

The protein belongs to the class-I aminoacyl-tRNA synthetase family. IleS type 1 subfamily. In terms of assembly, monomer. The cofactor is Zn(2+).

The protein localises to the cytoplasm. It catalyses the reaction tRNA(Ile) + L-isoleucine + ATP = L-isoleucyl-tRNA(Ile) + AMP + diphosphate. Its function is as follows. Catalyzes the attachment of isoleucine to tRNA(Ile). As IleRS can inadvertently accommodate and process structurally similar amino acids such as valine, to avoid such errors it has two additional distinct tRNA(Ile)-dependent editing activities. One activity is designated as 'pretransfer' editing and involves the hydrolysis of activated Val-AMP. The other activity is designated 'posttransfer' editing and involves deacylation of mischarged Val-tRNA(Ile). This chain is Isoleucine--tRNA ligase, found in Microcystis aeruginosa (strain NIES-843 / IAM M-2473).